A 543-amino-acid chain; its full sequence is Phosphoenolpyruvate carboxykinase (ATP) (543 aa).

An ATP-binding site is contributed by glycine 244 to threonine 251.

This sequence belongs to the phosphoenolpyruvate carboxykinase (ATP) family.

The catalysed reaction is oxaloacetate + ATP = phosphoenolpyruvate + ADP + CO2. It functions in the pathway carbohydrate biosynthesis; gluconeogenesis. The chain is Phosphoenolpyruvate carboxykinase (ATP) (PCK1) from Kluyveromyces lactis (strain ATCC 8585 / CBS 2359 / DSM 70799 / NBRC 1267 / NRRL Y-1140 / WM37) (Yeast).